Reading from the N-terminus, the 367-residue chain is 3-dehydroquinate synthase (367 aa).

Residues 111–115 (GVVGD), 135–136 (TS), Lys148, Lys157, and 175–178 (TLDT) each bind NAD(+). Glu190, His254, and His271 together coordinate Zn(2+).

It belongs to the sugar phosphate cyclases superfamily. Dehydroquinate synthase family. The cofactor is Co(2+). It depends on Zn(2+) as a cofactor. Requires NAD(+) as cofactor.

The protein localises to the cytoplasm. The catalysed reaction is 7-phospho-2-dehydro-3-deoxy-D-arabino-heptonate = 3-dehydroquinate + phosphate. The protein operates within metabolic intermediate biosynthesis; chorismate biosynthesis; chorismate from D-erythrose 4-phosphate and phosphoenolpyruvate: step 2/7. Catalyzes the conversion of 3-deoxy-D-arabino-heptulosonate 7-phosphate (DAHP) to dehydroquinate (DHQ). The protein is 3-dehydroquinate synthase of Salinibacter ruber (strain DSM 13855 / M31).